The primary structure comprises 467 residues: Glutamine synthetase (467 aa).

A GS beta-grasp domain is found at 14-98 (EEVEYVDIRF…VHCNVVEPDT (85 aa)). The 362-residue stretch at 106 to 467 (PRGAAVKAEA…PVEYQMYYSC (362 aa)) folds into the GS catalytic domain. The Mg(2+) site is built by glutamate 131 and glutamate 133. Aspartate 209 serves as a coordination point for ATP. Mg(2+)-binding residues include glutamate 214 and glutamate 221. Residues 265 to 266 (NG) and glycine 266 contribute to the L-glutamate site. A Mg(2+)-binding site is contributed by histidine 270. Residues 272–274 (NMS) and serine 274 contribute to the ATP site. Residues arginine 320, glutamate 326, and arginine 338 each contribute to the L-glutamate site. Positions 338 and 343 each coordinate ATP. Residue glutamate 356 participates in Mg(2+) binding. Position 358 (arginine 358) interacts with L-glutamate. An O-AMP-tyrosine modification is found at tyrosine 396.

The protein belongs to the glutamine synthetase family. In terms of assembly, oligomer of 12 subunits arranged in the form of two hexameric ring. Mg(2+) serves as cofactor.

It is found in the cytoplasm. It carries out the reaction L-glutamate + NH4(+) + ATP = L-glutamine + ADP + phosphate + H(+). Its activity is regulated as follows. The activity of this enzyme could be controlled by adenylation under conditions of abundant glutamine. Catalyzes the ATP-dependent biosynthesis of glutamine from glutamate and ammonia. This is Glutamine synthetase from Cereibacter sphaeroides (Rhodobacter sphaeroides).